The sequence spans 186 residues: Probable RNA 2'-phosphotransferase (186 aa).

The protein belongs to the KptA/TPT1 family.

Removes the 2'-phosphate from RNA via an intermediate in which the phosphate is ADP-ribosylated by NAD followed by a presumed transesterification to release the RNA and generate ADP-ribose 1''-2''-cyclic phosphate (APPR&gt;P). May function as an ADP-ribosylase. The polypeptide is Probable RNA 2'-phosphotransferase (Clostridium perfringens (strain SM101 / Type A)).